The chain runs to 289 residues: Protease HtpX homolog (289 aa).

Transmembrane regions (helical) follow at residues 3-23 (IVGT…WFFF) and 28-48 (TILA…YKVG). H129 is a binding site for Zn(2+). Residue E130 is part of the active site. Residue H133 coordinates Zn(2+). 2 helical membrane-spanning segments follow: residues 144 to 164 (LGQG…LFSG) and 172 to 192 (FLAI…VLAI). E197 lines the Zn(2+) pocket. The disordered stretch occupies residues 222-250 (SQGNEQAAQQQRQRTSRGRGRRQRGQRND). The segment covering 235-246 (RTSRGRGRRQRG) has biased composition (basic residues).

It belongs to the peptidase M48B family. Zn(2+) serves as cofactor.

Its subcellular location is the cell membrane. This is Protease HtpX homolog from Halobacterium salinarum (strain ATCC 700922 / JCM 11081 / NRC-1) (Halobacterium halobium).